Consider the following 539-residue polypeptide: Chaperonin GroEL (539 aa).

ATP-binding positions include 29 to 32 (TIGP), 86 to 90 (DGTTT), glycine 413, 476 to 478 (NAA), and aspartate 492.

It belongs to the chaperonin (HSP60) family. In terms of assembly, forms a cylinder of 14 subunits composed of two heptameric rings stacked back-to-back. Interacts with the co-chaperonin GroES.

It is found in the cytoplasm. It catalyses the reaction ATP + H2O + a folded polypeptide = ADP + phosphate + an unfolded polypeptide.. Functionally, together with its co-chaperonin GroES, plays an essential role in assisting protein folding. The GroEL-GroES system forms a nano-cage that allows encapsulation of the non-native substrate proteins and provides a physical environment optimized to promote and accelerate protein folding. The chain is Chaperonin GroEL from Pediococcus pentosaceus (strain ATCC 25745 / CCUG 21536 / LMG 10740 / 183-1w).